The following is a 1305-amino-acid chain: Contactin-associated protein like 5-4 (1305 aa).

An N-terminal signal peptide occupies residues 1–24; the sequence is MNSVRRLNSILTLVLSGLWHLGLT. At 25–1237 the chain is on the extracellular side; sequence ATNYNCDEPL…LTDTVQSDSA (1213 aa). Residues 30–174 form the F5/8 type C domain; it reads CDEPLASFLS…IGMRVEVYGC (145 aa). The cysteines at positions 30 and 174 are disulfide-linked. Laminin G-like domains follow at residues 180–360 and 367–544; these read IVGF…TFSC and PITF…IDLC. N-linked (GlcNAc...) asparagine glycosylation is present at asparagine 282. The cysteines at positions 329 and 360 are disulfide-linked. N-linked (GlcNAc...) asparagine glycosylation is present at asparagine 496. Intrachain disulfides connect cysteine 512-cysteine 544, cysteine 550-cysteine 561, and cysteine 555-cysteine 570. Residues 546-583 form the EGF-like 1 domain; the sequence is IKDRCLPNYCEHGGHCAQNWTTFYCNCSDTGYTGATCH. N-linked (GlcNAc...) asparagine glycosylation is present at asparagine 571. A disulfide bridge links cysteine 572 with cysteine 582. One can recognise a Fibrinogen C-terminal domain in the interval 584-790; it reads DSVYEQSCEV…LRCYGDRHFW (207 aa). The N-linked (GlcNAc...) asparagine glycan is linked to asparagine 622. The region spanning 791–956 is the Laminin G-like 3 domain; that stretch reads NAVSFTTEAS…KLMSGVTPGC (166 aa). 4 disulfide bridges follow: cysteine 929-cysteine 956, cysteine 960-cysteine 973, cysteine 967-cysteine 982, and cysteine 984-cysteine 994. The EGF-like 2 domain occupies 957 to 995; that stretch reads LGHCSSYGSNCLNGGKCVEKQSGYSCDCTNSPNEGPFCQ. One can recognise a Laminin G-like 4 domain in the interval 1014-1198; that stretch reads EPYLVIKNTS…VQGTLTESGC (185 aa). N-linked (GlcNAc...) asparagine glycosylation occurs at asparagine 1057. A disulfide bridge connects residues cysteine 1163 and cysteine 1198. The helical transmembrane segment at 1238–1258 threads the bilayer; it reads VIGGIIALVTFVTFCVIGIMI. Residues 1259-1305 are Cytoplasmic-facing; that stretch reads HFLYLHKQSHCTNQTKEKEYSENLSNSFRNAIDLQNTASECKREYFI.

The protein belongs to the neurexin family.

It localises to the membrane. Its function is as follows. May play a role in the correct development and proper functioning of the peripheral and central nervous system and be involved in cell adhesion and intercellular communication. The polypeptide is Contactin-associated protein like 5-4 (Cntnap5d) (Rattus norvegicus (Rat)).